Consider the following 346-residue polypeptide: Probable choline kinase 1 (346 aa).

3 residues coordinate ATP: R73, Q210, and D227.

The protein belongs to the choline/ethanolamine kinase family. As to expression, expressed in roots. Expressed at low levels in cauline leaves and flowers.

It carries out the reaction choline + ATP = phosphocholine + ADP + H(+). The protein operates within phospholipid metabolism; phosphatidylcholine biosynthesis; phosphocholine from choline: step 1/1. Involved in phospholipid biosynthesis. Catalyzes the first step in phosphatidylcholine biosynthesis. This is Probable choline kinase 1 (CK1) from Arabidopsis thaliana (Mouse-ear cress).